The following is a 632-amino-acid chain: Extracellular metalloproteinase 2 (632 aa).

The N-terminal stretch at M1 to G19 is a signal peptide. Residues L20–S244 constitute a propeptide that is removed on maturation. The N-linked (GlcNAc...) asparagine glycan is linked to N270. H429 provides a ligand contact to Zn(2+). E430 is an active-site residue. H433 serves as a coordination point for Zn(2+).

The protein belongs to the peptidase M36 family. The cofactor is Zn(2+).

It localises to the secreted. Its function is as follows. Secreted metalloproteinase that allows assimilation of proteinaceous substrates and probably acts as a virulence factor. The sequence is that of Extracellular metalloproteinase 2 (MEP2) from Arthroderma gypseum (strain ATCC MYA-4604 / CBS 118893) (Microsporum gypseum).